Here is a 598-residue protein sequence, read N- to C-terminus: Nuclear receptor subfamily 4immunitygroup A member 1 (598 aa).

Disordered stretches follow at residues 1 to 44 (MPCI…EAAP), 131 to 158 (YYGSPCSAPSPSTPSFQPPQLSPWDGSF), 177 to 206 (LPKASGPPQPPAFFSFSPPTGPSPSLAQSP), and 221 to 265 (GESY…GSEG). A compositionally biased stretch (low complexity) spans 134-145 (SPCSAPSPSTPS). A required for nuclear import region spans residues 171–466 (RAWTEQLPKA…PGEGKLIFCS (296 aa)). The segment at residues 264–339 (EGRCAVCGDN…VGMVKEVVRT (76 aa)) is a DNA-binding region (nuclear receptor). NR C4-type zinc fingers lie at residues 267–287 (CAVCGDNASCQHYGVRTCEGC) and 303–327 (CLANKDCPVDKRRRNRCQFCRFQKC). The tract at residues 268 to 354 (AVCGDNASCQ…RRGRLPSKPK (87 aa)) is required for binding NBRE-containing DNA. Positions 299 to 361 (AKYICLANKD…KPKQPPDASP (63 aa)) are required for the interaction with RXRA. Phosphoserine; by PKA is present on S341. The tract at residues 341-361 (SLKGRRGRLPSKPKQPPDASP) is disordered. S351 is modified (phosphoserine). The NR LBD domain occupies 360–595 (SPANLLTSLV…PIIDKIFMDT (236 aa)). Positions 521–544 (PRRVEELQNRIASCLKEHVAAVAG) are binds lipopolysaccharide. Residues 584-595 (PPPIIDKIFMDT) form an AF-2 region.

It belongs to the nuclear hormone receptor family. NR4 subfamily. As to quaternary structure, binds the NGFI-B response element (NBRE) as a monomer. Binds the Nur response element (NurRE), consisting of two inverse NBRE-related octanucleotide repeats separated by 6 base-pairs, as a dimer. Interacts (via N-terminus) with NLRP3 (via LRR repeat domain); the interaction is direct, requires binding of NR4A1/Nur77 to NBRE-containing dsDNA and lipopolysaccharide, and leads to non-canonical NLRP3 inflammasome activation. Interacts with GADD45GIP1. Interacts with STK11. Interacts with IFI27. Heterodimer (via DNA-binding domain) with RXRA (via C-terminus); DNA-binding of the heterodimer is enhanced by 9-cis retinoic acid. Competes for the RXRA interaction with EP300 and thereby attenuates EP300 mediated acetylation of RXRA. Interacts with NCOA1. Interacts with NCOA2. Interacts with NCOA3. Zn(2+) serves as cofactor. In terms of processing, phosphorylated at Ser-351 by RPS6KA1 and RPS6KA3 in response to mitogenic or stress stimuli. Post-translationally, acetylated by p300/CBP, acetylation increases stability. Deacetylated by HDAC1. In terms of tissue distribution, fetal muscle and adult liver, brain and thyroid.

Its subcellular location is the nucleus. It is found in the cytoplasm. It localises to the cytosol. The protein resides in the mitochondrion. With respect to regulation, its transcription factor activity is activated by binding cytosporone B (Csn-B) via its ligand-binding (NR LBD) domain and stimulates recruitment of coactivators NCOA1 and NCOA2, but not NCOA3, to promoters. Csn-B-binding is also accompanied by its translocation to the mitochondrion. Its transcription factor activity is activated by corticotropin-releasing hormone (CRH) and forskolin. Not activated by binding cytosporone C (Csn-C). Its function is as follows. Orphan nuclear receptor. Binds the NGFI-B response element (NBRE) 5'-AAAGGTCA-3'. Binds 9-cis-retinoic acid outside of its ligand-binding (NR LBD) domain. Participates in energy homeostasis by sequestrating the kinase STK11 in the nucleus, thereby attenuating cytoplasmic AMPK activation. Regulates the inflammatory response in macrophages by regulating metabolic adaptations during inflammation, including repressing the transcription of genes involved in the citric acid cycle (TCA). Inhibits NF-kappa-B signaling by binding to low-affinity NF-kappa-B binding sites, such as at the IL2 promoter. May act concomitantly with NR4A2 in regulating the expression of delayed-early genes during liver regeneration. Plays a role in the vascular response to injury. In the cytosol, upon its detection of both bacterial lipopolysaccharide (LPS) and NBRE-containing mitochondrial DNA released by GSDMD pores during pyroptosis, it promotes non-canonical NLRP3 inflammasome activation by stimulating association of NLRP3 and NEK7. This Homo sapiens (Human) protein is Nuclear receptor subfamily 4immunitygroup A member 1 (NR4A1).